We begin with the raw amino-acid sequence, 156 residues long: H/ACA ribonucleoprotein complex subunit 2-like protein (156 aa).

This sequence belongs to the eukaryotic ribosomal protein eL8 family. As to quaternary structure, component of the small nucleolar ribonucleoprotein particle containing H/ACA-type snoRNAs (H/ACA snoRNPs).

Its subcellular location is the nucleus. The protein localises to the nucleolus. Required for ribosome biogenesis. Part of a complex which catalyzes pseudouridylation of rRNA. This involves the isomerization of uridine such that the ribose is subsequently attached to C5, instead of the normal N1. Pseudouridine ('psi') residues may serve to stabilize the conformation of rRNAs. In Arabidopsis thaliana (Mouse-ear cress), this protein is H/ACA ribonucleoprotein complex subunit 2-like protein.